Reading from the N-terminus, the 56-residue chain is Large ribosomal subunit protein bL32 (56 aa).

The interval 1-21 (MAVQKNKPTRSKRGMRRSHDA) is disordered. A compositionally biased stretch (basic residues) spans 7 to 16 (KPTRSKRGMR).

It belongs to the bacterial ribosomal protein bL32 family.

In Hamiltonella defensa subsp. Acyrthosiphon pisum (strain 5AT), this protein is Large ribosomal subunit protein bL32.